The chain runs to 91 residues: RNA-binding protein Hfq (91 aa).

The Sm domain occupies 9–68 (DPFLNALRRERVPVSIYLVNGIKLQGQVESFDQFVILLKNTVSQMVYKHAISTVVPSRPF). The segment at 66 to 91 (RPFNVGSHQGGSSNYNAQQDDSAGEQ) is disordered. Polar residues predominate over residues 71–91 (GSHQGGSSNYNAQQDDSAGEQ).

This sequence belongs to the Hfq family. As to quaternary structure, homohexamer.

In terms of biological role, RNA chaperone that binds small regulatory RNA (sRNAs) and mRNAs to facilitate mRNA translational regulation in response to envelope stress, environmental stress and changes in metabolite concentrations. Also binds with high specificity to tRNAs. The sequence is that of RNA-binding protein Hfq from Shewanella amazonensis (strain ATCC BAA-1098 / SB2B).